The chain runs to 585 residues: Cytochrome P450 monooxygenase AOL_s00215g278 (585 aa).

Cysteine 518 lines the heme pocket.

Belongs to the cytochrome P450 family. The cofactor is heme.

Its pathway is secondary metabolite biosynthesis; terpenoid biosynthesis. Cytochrome P450 monooxygenase; part of the gene cluster that mediates the biosynthesis of sesquiterpenyl epoxy-cyclohexenoids (SECs) such as anthrobotrisins and arthrosporols, metabolites that possess a novel hybrid carbon skeleton consisting of a polyketide-derived epoxycyclohexenol combined with a terpenoid-derived monocyclic sesquiterpenol substructure (PKS-PTS hybrid). The SEC pathway plays an important role for fungal soil colonization via decreasing fungal nematode-capturing ability. Within the pathway, the cytochrome P450 monooxygenase AOL_s00215g278 plays a role in the oxygenation of the phenol moiety, most likely in the epoxy formation. The pathway begins with the biosynthesis of 6-methylsalicylic acid (6-MSA), the first precursor of the polyketide-derived epoxycyclohexenol in arthrosporols, by the polyketide synthase (PKS) AOL_s00215g283 via condensation of 1 acetate and 3 malonate units. The 6-methylsalicylic acid decarboxylase AOL_s00215g281 then catalyzes the decarboxylation of 6-methylsalicylic acid to yield m-cresol. The cytochrome P450 monooxygenase AOL_s00215g282 further oxidizes m-cresol to yield toluquinol. With the assistance of the oxidoreductase AOL_s00215g277, the polyprenyl transferase AOL_s00215g276 catalyzes the farnesylation of toluquinol to produce farnesyl hydroquinone, the hybrid precursor for biosynthesis of SECs. Farnesyl hydroquinone undergoes epoxidation and then subsequent dehydrogenation to form farnesyl epoxy-quinone, the first and simplest SEC. The cytochrome P450 monooxygenase AOL_s00215g278 and the FAD-dependent monooxygenase AOL_s00215g279 might be involved in the oxygenation of the phenol moiety, most likely in the epoxy formation. The cytochrome P450 monooxygenases AOL_s00215g274 and AOL_s00215g280 are involved in specific regional ketone reductions at respectively C-4 and C-1 of farnesyl epoxy-quinone PubMed:33823587. This is Cytochrome P450 monooxygenase AOL_s00215g278 from Arthrobotrys oligospora (strain ATCC 24927 / CBS 115.81 / DSM 1491) (Nematode-trapping fungus).